The primary structure comprises 247 residues: tRNA1(Val) (adenine(37)-N6)-methyltransferase (247 aa).

The protein belongs to the methyltransferase superfamily. tRNA (adenine-N(6)-)-methyltransferase family.

It localises to the cytoplasm. It carries out the reaction adenosine(37) in tRNA1(Val) + S-adenosyl-L-methionine = N(6)-methyladenosine(37) in tRNA1(Val) + S-adenosyl-L-homocysteine + H(+). In terms of biological role, specifically methylates the adenine in position 37 of tRNA(1)(Val) (anticodon cmo5UAC). The sequence is that of tRNA1(Val) (adenine(37)-N6)-methyltransferase from Edwardsiella ictaluri (strain 93-146).